The chain runs to 385 residues: 1-deoxy-D-xylulose 5-phosphate reductoisomerase (385 aa).

7 residues coordinate NADPH: threonine 10, glycine 11, serine 12, isoleucine 13, glycine 36, asparagine 38, and asparagine 122. Lysine 123 contacts 1-deoxy-D-xylulose 5-phosphate. Residue glutamate 124 coordinates NADPH. A Mn(2+)-binding site is contributed by aspartate 148. Serine 149, glutamate 150, serine 174, and histidine 197 together coordinate 1-deoxy-D-xylulose 5-phosphate. Glutamate 150 contributes to the Mn(2+) binding site. Glycine 203 provides a ligand contact to NADPH. Residues serine 210, asparagine 215, lysine 216, and glutamate 219 each contribute to the 1-deoxy-D-xylulose 5-phosphate site. Glutamate 219 contributes to the Mn(2+) binding site.

Belongs to the DXR family. The cofactor is Mg(2+). Mn(2+) is required as a cofactor.

The catalysed reaction is 2-C-methyl-D-erythritol 4-phosphate + NADP(+) = 1-deoxy-D-xylulose 5-phosphate + NADPH + H(+). The protein operates within isoprenoid biosynthesis; isopentenyl diphosphate biosynthesis via DXP pathway; isopentenyl diphosphate from 1-deoxy-D-xylulose 5-phosphate: step 1/6. In terms of biological role, catalyzes the NADPH-dependent rearrangement and reduction of 1-deoxy-D-xylulose-5-phosphate (DXP) to 2-C-methyl-D-erythritol 4-phosphate (MEP). The protein is 1-deoxy-D-xylulose 5-phosphate reductoisomerase of Citrifermentans bemidjiense (strain ATCC BAA-1014 / DSM 16622 / JCM 12645 / Bem) (Geobacter bemidjiensis).